Consider the following 161-residue polypeptide: MDHRTSIAQAMVDRISKQMDGSQPDEYFNNLYGNVSRQTYKFEEIREFPYVAVHIGTETGQYLPSGQQWMFLELPILVYDKEKTDIQEQLEKLVADIKTVIDTGGNLEYTVSKPNGSTFPCEATDMIITSVSTDEGLLAPYGLAEINVTVRYQPPRRSLRR.

Homohexamer.

The protein localises to the virion. Its function is as follows. Plays an essential role in tail assembly by capping the rapidly polymerizing tail once it has reached its requisite length. This is Tail tube terminator protein p142 from Escherichia phage T5 (Enterobacteria phage T5).